Consider the following 213-residue polypeptide: Orotate phosphoribosyltransferase (213 aa).

5-phospho-alpha-D-ribose 1-diphosphate is bound at residue lysine 26. Residue 34–35 (FF) participates in orotate binding. 5-phospho-alpha-D-ribose 1-diphosphate is bound by residues 72–73 (YK), arginine 99, lysine 100, lysine 103, histidine 105, and 124–132 (DDVITAGTA). The orotate site is built by threonine 128 and arginine 156.

The protein belongs to the purine/pyrimidine phosphoribosyltransferase family. PyrE subfamily. In terms of assembly, homodimer. Requires Mg(2+) as cofactor.

It catalyses the reaction orotidine 5'-phosphate + diphosphate = orotate + 5-phospho-alpha-D-ribose 1-diphosphate. It functions in the pathway pyrimidine metabolism; UMP biosynthesis via de novo pathway; UMP from orotate: step 1/2. Catalyzes the transfer of a ribosyl phosphate group from 5-phosphoribose 1-diphosphate to orotate, leading to the formation of orotidine monophosphate (OMP). The sequence is that of Orotate phosphoribosyltransferase from Cronobacter sakazakii (strain ATCC BAA-894) (Enterobacter sakazakii).